A 102-amino-acid polypeptide reads, in one-letter code: Large ribosomal subunit protein bL21 (102 aa).

The protein belongs to the bacterial ribosomal protein bL21 family. In terms of assembly, part of the 50S ribosomal subunit. Contacts protein L20.

Its function is as follows. This protein binds to 23S rRNA in the presence of protein L20. In Stenotrophomonas maltophilia (strain K279a), this protein is Large ribosomal subunit protein bL21.